A 341-amino-acid polypeptide reads, in one-letter code: GTPase Obg (341 aa).

Residues 1–159 form the Obg domain; the sequence is MKFLDQAKVY…RAIWLRLKLI (159 aa). The OBG-type G domain occupies 160–327; sequence ADAGLVGLPN…VLRAGAHIIE (168 aa). GTP contacts are provided by residues 166–173, 191–195, 212–215, 279–282, and 308–310; these read GLPNAGKS, FTTLH, DIPG, SQID, and SAV. The Mg(2+) site is built by S173 and T193.

Belongs to the TRAFAC class OBG-HflX-like GTPase superfamily. OBG GTPase family. Monomer. Mg(2+) is required as a cofactor.

Its subcellular location is the cytoplasm. An essential GTPase which binds GTP, GDP and possibly (p)ppGpp with moderate affinity, with high nucleotide exchange rates and a fairly low GTP hydrolysis rate. Plays a role in control of the cell cycle, stress response, ribosome biogenesis and in those bacteria that undergo differentiation, in morphogenesis control. The protein is GTPase Obg of Bartonella tribocorum (strain CIP 105476 / IBS 506).